The primary structure comprises 856 residues: Glucans biosynthesis glucosyltransferase H (856 aa).

The next 6 helical transmembrane spans lie at 144-164 (ILLV…KGIM), 198-218 (ILIL…TALM), 517-537 (VFLT…FLVL), 574-594 (LFST…ILIW), 608-628 (TLSM…RMIF), and 684-704 (FLWW…VSVI).

Belongs to the glycosyltransferase 2 family. OpgH subfamily.

It is found in the cell inner membrane. It functions in the pathway glycan metabolism; osmoregulated periplasmic glucan (OPG) biosynthesis. Involved in the biosynthesis of osmoregulated periplasmic glucans (OPGs). This chain is Glucans biosynthesis glucosyltransferase H, found in Pseudomonas fluorescens (strain ATCC BAA-477 / NRRL B-23932 / Pf-5).